We begin with the raw amino-acid sequence, 56 residues long: Large ribosomal subunit protein eL40 (56 aa).

This sequence belongs to the eukaryotic ribosomal protein eL40 family.

The chain is Large ribosomal subunit protein eL40 from Saccharolobus islandicus (strain Y.N.15.51 / Yellowstone #2) (Sulfolobus islandicus).